A 240-amino-acid chain; its full sequence is tRNA (guanine-N(1)-)-methyltransferase (240 aa).

S-adenosyl-L-methionine-binding positions include G110 and I130–L135.

It belongs to the RNA methyltransferase TrmD family. As to quaternary structure, homodimer.

It localises to the cytoplasm. It catalyses the reaction guanosine(37) in tRNA + S-adenosyl-L-methionine = N(1)-methylguanosine(37) in tRNA + S-adenosyl-L-homocysteine + H(+). Its function is as follows. Specifically methylates guanosine-37 in various tRNAs. This is tRNA (guanine-N(1)-)-methyltransferase from Macrococcus caseolyticus (strain JCSC5402) (Macrococcoides caseolyticum).